The chain runs to 233 residues: Large ribosomal subunit protein uL22m (233 aa).

This sequence belongs to the universal ribosomal protein uL22 family. Component of the mitochondrial ribosome large subunit (39S) which comprises a 16S rRNA and about 50 distinct proteins.

It localises to the mitochondrion. This chain is Large ribosomal subunit protein uL22m (mRpL22), found in Drosophila pseudoobscura pseudoobscura (Fruit fly).